Reading from the N-terminus, the 727-residue chain is MSIFNKVTKSFQWGDKTVVMETGEIARQASGAVLVNIDDTVVLATVVGSKQAKPGQDFFPLTVDYIEKTYAAGKIPGSFFKREAKPSELETLTSRLIDRPIRPLFPEGFYNEVHVVIHTISLNPEVDADIAAMIAVSAALSVSGIPFNGPIGAARVGYVNGEYVLNPGQTARKSSQLDLVVAGTEAAVLMVESEAQQLSEEIMLGAVVFGHEQGKVAINAIHELVRDAGKPVWDWQPPAKDETFIAKVTALAEDKLRAAYQIRSKQARTQALREASASVLESLKGEGVEFDAVKVEALLFDIEAKIVRSQILAGEPRIDGRDTRTVRPIEIRNSVLPRTHGSALFTRGETQALVVSTLGTERDAQRIDALAGEFEDRFIFHYNMPPFATGEVGRMGSTKRREIGHGRLAKRALVACLPSKDEFPYTIRVVSEITESNGSSSMASVCGGCLSLMDAGVPMKAHVAGIAMGLIKEDNRFAVLTDILGDEDHLGDMDFKVAGTTNGITALQMDIKIQGITKEIMQVALAQAKEARMHILGKMQEAMGEAKTEISSFAPKLYTMKINPEKIRDVIGKGGATIRALTDETGCQINIEEDGTITIAATEAAKADEAKRRIEEITAEVEVGKVYEGPVTKILDFGALINLLPGKDGLLHISQIAHERVEKVGDYLQEGQVVKVKVLETDDKGRVKLSMKALADRPAGDSGRPAPAERGERRERRDGGASEQQQQ.

Residues Asp-488 and Asp-494 each contribute to the Mg(2+) site. A KH domain is found at 555–614 (PKLYTMKINPEKIRDVIGKGGATIRALTDETGCQINIEEDGTITIAATEAAKADEAKRRI). Residues 624 to 692 (GKVYEGPVTK…DKGRVKLSMK (69 aa)) form the S1 motif domain. The disordered stretch occupies residues 691-727 (MKALADRPAGDSGRPAPAERGERRERRDGGASEQQQQ). Positions 707–720 (PAERGERRERRDGG) are enriched in basic and acidic residues.

Belongs to the polyribonucleotide nucleotidyltransferase family. Requires Mg(2+) as cofactor.

The protein resides in the cytoplasm. It catalyses the reaction RNA(n+1) + phosphate = RNA(n) + a ribonucleoside 5'-diphosphate. Its function is as follows. Involved in mRNA degradation. Catalyzes the phosphorolysis of single-stranded polyribonucleotides processively in the 3'- to 5'-direction. The chain is Polyribonucleotide nucleotidyltransferase from Acidovorax ebreus (strain TPSY) (Diaphorobacter sp. (strain TPSY)).